Here is a 127-residue protein sequence, read N- to C-terminus: MSNRKPYVREVKRTWWKNHPFYRFYMLREATVLPLILFTLFLTFGLGCLVKGPEAWQGWLAFMANPIVVAINIVALLGSLFHAQTFFSMMPQVMPIRLKGKPVDKKIIVLTQWAAVAFISLIVLIVV.

3 consecutive transmembrane segments (helical) span residues 30–50 (ATVLPLILFTLFLTFGLGCLV), 58–78 (GWLAFMANPIVVAINIVALLG), and 107–127 (IIVLTQWAAVAFISLIVLIVV).

This sequence belongs to the FrdC family. Part of an enzyme complex containing four subunits: a flavoprotein (FrdA), an iron-sulfur protein (FrdB), and two hydrophobic anchor proteins (FrdC and FrdD).

It is found in the cell inner membrane. Anchors the catalytic components of the fumarate reductase complex to the cell membrane, binds quinones. The polypeptide is Fumarate reductase subunit C (Vibrio parahaemolyticus serotype O3:K6 (strain RIMD 2210633)).